The primary structure comprises 391 residues: uncharacterized protein (391 aa).

It belongs to the mycobacterial PPE family.

This is an uncharacterized protein from Mycobacterium tuberculosis (strain CDC 1551 / Oshkosh).